We begin with the raw amino-acid sequence, 269 residues long: Cell wall protein TIR3 (269 aa).

A signal peptide spans Met1–Ala22. Positions Ser128–Lys242 are disordered. Residue Asn234 is glycosylated (N-linked (GlcNAc...) asparagine). Gly245 carries GPI-anchor amidated glycine lipidation. The propeptide at Ala246–Leu269 is removed in mature form.

This sequence belongs to the SRP1/TIP1 family. Extensively O-glycosylated. Post-translationally, the GPI-anchor is attached to the protein in the endoplasmic reticulum and serves to target the protein to the cell surface. There, the glucosamine-inositol phospholipid moiety is cleaved off and the GPI-modified mannoprotein is covalently attached via its lipidless GPI glycan remnant to the 1,6-beta-glucan of the outer cell wall layer.

It localises to the secreted. It is found in the cell wall. Its subcellular location is the membrane. Component of the cell wall. Required for anaerobic growth. This chain is Cell wall protein TIR3 (TIR3), found in Saccharomyces cerevisiae (strain ATCC 204508 / S288c) (Baker's yeast).